The primary structure comprises 327 residues: Altered inheritance rate of mitochondria protein 25 (327 aa).

The protein belongs to the phospholipid scramblase family.

Its subcellular location is the mitochondrion. The sequence is that of Altered inheritance rate of mitochondria protein 25 (AIM25) from Saccharomyces cerevisiae (strain ATCC 204508 / S288c) (Baker's yeast).